Consider the following 263-residue polypeptide: Acyl-[acyl-carrier-protein]--UDP-N-acetylglucosamine O-acyltransferase (263 aa).

Belongs to the transferase hexapeptide repeat family. LpxA subfamily. As to quaternary structure, homotrimer.

It localises to the cytoplasm. It carries out the reaction a (3R)-hydroxyacyl-[ACP] + UDP-N-acetyl-alpha-D-glucosamine = a UDP-3-O-[(3R)-3-hydroxyacyl]-N-acetyl-alpha-D-glucosamine + holo-[ACP]. It functions in the pathway glycolipid biosynthesis; lipid IV(A) biosynthesis; lipid IV(A) from (3R)-3-hydroxytetradecanoyl-[acyl-carrier-protein] and UDP-N-acetyl-alpha-D-glucosamine: step 1/6. In terms of biological role, involved in the biosynthesis of lipid A, a phosphorylated glycolipid that anchors the lipopolysaccharide to the outer membrane of the cell. This Xylella fastidiosa (strain Temecula1 / ATCC 700964) protein is Acyl-[acyl-carrier-protein]--UDP-N-acetylglucosamine O-acyltransferase.